The chain runs to 348 residues: Mannonate dehydratase (348 aa).

It belongs to the mannonate dehydratase family. The cofactor is Fe(2+). It depends on Mn(2+) as a cofactor.

The catalysed reaction is D-mannonate = 2-dehydro-3-deoxy-D-gluconate + H2O. It participates in carbohydrate metabolism; pentose and glucuronate interconversion. Its function is as follows. Catalyzes the dehydration of D-mannonate. This is Mannonate dehydratase from Staphylococcus haemolyticus (strain JCSC1435).